The sequence spans 264 residues: Phosphonoacetaldehyde hydrolase (264 aa).

The active-site Nucleophile is the D9. Positions 9 and 11 each coordinate Mg(2+). K50 functions as the Schiff-base intermediate with substrate in the catalytic mechanism. D183 serves as a coordination point for Mg(2+).

The protein belongs to the HAD-like hydrolase superfamily. PhnX family. In terms of assembly, homodimer. The cofactor is Mg(2+).

The enzyme catalyses phosphonoacetaldehyde + H2O = acetaldehyde + phosphate + H(+). Functionally, involved in phosphonate degradation. This chain is Phosphonoacetaldehyde hydrolase, found in Bacillus cereus (strain ZK / E33L).